Reading from the N-terminus, the 99-residue chain is Large ribosomal subunit protein bL25 (99 aa).

This sequence belongs to the bacterial ribosomal protein bL25 family. Part of the 50S ribosomal subunit; part of the 5S rRNA/L5/L18/L25 subcomplex. Contacts the 5S rRNA. Binds to the 5S rRNA independently of L5 and L18.

Its function is as follows. This is one of the proteins that binds to the 5S RNA in the ribosome where it forms part of the central protuberance. The protein is Large ribosomal subunit protein bL25 of Nostoc sp. (strain PCC 7120 / SAG 25.82 / UTEX 2576).